Reading from the N-terminus, the 320-residue chain is GMP reductase (320 aa).

Cys-174 functions as the Thioimidate intermediate in the catalytic mechanism. 203–226 (IIADGGLRVNGDIAKSIRFGATMC) contacts NADP(+).

It belongs to the IMPDH/GMPR family. GuaC type 2 subfamily.

It catalyses the reaction IMP + NH4(+) + NADP(+) = GMP + NADPH + 2 H(+). Catalyzes the irreversible NADPH-dependent deamination of GMP to IMP. It functions in the conversion of nucleobase, nucleoside and nucleotide derivatives of G to A nucleotides, and in maintaining the intracellular balance of A and G nucleotides. The sequence is that of GMP reductase from Mesoplasma florum (strain ATCC 33453 / NBRC 100688 / NCTC 11704 / L1) (Acholeplasma florum).